The sequence spans 136 residues: General odorant-binding protein 57e (136 aa).

An N-terminal signal peptide occupies residues 1 to 20 (MLDQLTLCLLLNFLCANVLA). Cystine bridges form between cysteine 28–cysteine 61, cysteine 57–cysteine 109, and cysteine 98–cysteine 118.

The protein belongs to the PBP/GOBP family.

In terms of biological role, present in the aqueous fluid surrounding olfactory sensory dendrites and are thought to aid in the capture and transport of hydrophobic odorants into and through this fluid. In Drosophila melanogaster (Fruit fly), this protein is General odorant-binding protein 57e.